Reading from the N-terminus, the 338-residue chain is tRNA-specific 2-thiouridylase MnmA (338 aa).

ATP is bound by residues 6-13 and Met-32; that span reads AMSGGVDS. The active-site Nucleophile is Cys-92. Cys-92 and Cys-186 are oxidised to a cystine. Position 116 (Gly-116) interacts with ATP. Positions 134 to 136 are interaction with tRNA; it reads KDQ. Catalysis depends on Cys-186, which acts as the Cysteine persulfide intermediate. Residues 288 to 289 are interaction with tRNA; sequence RY.

Belongs to the MnmA/TRMU family.

The protein resides in the cytoplasm. The enzyme catalyses S-sulfanyl-L-cysteinyl-[protein] + uridine(34) in tRNA + AH2 + ATP = 2-thiouridine(34) in tRNA + L-cysteinyl-[protein] + A + AMP + diphosphate + H(+). Catalyzes the 2-thiolation of uridine at the wobble position (U34) of tRNA, leading to the formation of s(2)U34. The protein is tRNA-specific 2-thiouridylase MnmA of Campylobacter jejuni subsp. jejuni serotype O:2 (strain ATCC 700819 / NCTC 11168).